A 287-amino-acid polypeptide reads, in one-letter code: Prepilin leader peptidase/N-methyltransferase (287 aa).

The chain crosses the membrane as a helical span at residues 12-32 (FMYLVVGLFSLAVGSLLNVII). Residues cysteine 71, cysteine 74, cysteine 96, and cysteine 99 each coordinate Zn(2+). A run of 5 helical transmembrane segments spans residues 127-147 (FTIQ…LVFI), 158-178 (LTLG…FVSL), 182-202 (VLSC…FYLM), 215-235 (LFAA…LLIS), and 259-279 (PFGP…DSII).

Belongs to the peptidase A24 family. The cofactor is Zn(2+).

The protein resides in the cell inner membrane. It carries out the reaction Typically cleaves a -Gly-|-Phe- bond to release an N-terminal, basic peptide of 5-8 residues from type IV prepilin, and then N-methylates the new N-terminal amino group, the methyl donor being S-adenosyl-L-methionine.. Its function is as follows. Plays an essential role in type IV pili and type II pseudopili formation by proteolytically removing the leader sequence from substrate proteins and subsequently monomethylating the alpha-amino group of the newly exposed N-terminal phenylalanine. This is Prepilin leader peptidase/N-methyltransferase (pilD) from Legionella pneumophila.